Consider the following 155-residue polypeptide: Endoribonuclease YbeY (155 aa).

3 residues coordinate Zn(2+): His114, His118, and His124.

It belongs to the endoribonuclease YbeY family. It depends on Zn(2+) as a cofactor.

Its subcellular location is the cytoplasm. Single strand-specific metallo-endoribonuclease involved in late-stage 70S ribosome quality control and in maturation of the 3' terminus of the 16S rRNA. The protein is Endoribonuclease YbeY of Cronobacter sakazakii (strain ATCC BAA-894) (Enterobacter sakazakii).